Here is a 302-residue protein sequence, read N- to C-terminus: NAD kinase 2 (302 aa).

Catalysis depends on D78, which acts as the Proton acceptor. NAD(+) contacts are provided by residues 78-79, 152-153, D182, 193-198, and A217; these read DG, NE, and TAYALS.

Belongs to the NAD kinase family. It depends on a divalent metal cation as a cofactor.

It is found in the cytoplasm. It catalyses the reaction NAD(+) + ATP = ADP + NADP(+) + H(+). Its function is as follows. Involved in the regulation of the intracellular balance of NAD and NADP, and is a key enzyme in the biosynthesis of NADP. Catalyzes specifically the phosphorylation on 2'-hydroxyl of the adenosine moiety of NAD to yield NADP. The protein is NAD kinase 2 of Prochlorococcus marinus (strain MIT 9313).